The sequence spans 400 residues: TBC1 domain family member 13 (400 aa).

One can recognise a Rab-GAP TBC domain in the interval 35 to 345 (PCEGGLRCLC…RIWDSLFADG (311 aa)).

Interacts with RAB1A and RAB10; in a GTP-dependent manner. In terms of tissue distribution, expressed in adipocytes.

The protein resides in the membrane. It is found in the cytoplasm. Its function is as follows. Acts as a GTPase-activating protein for RAB35. Together with RAB35 may be involved in regulation of insulin-induced glucose transporter SLC2A4/GLUT4 translocation to the plasma membrane in adipocytes. This chain is TBC1 domain family member 13 (Tbc1d13), found in Mus musculus (Mouse).